A 479-amino-acid polypeptide reads, in one-letter code: Adenosylhomocysteinase (479 aa).

Residues Thr-66, Asp-142, and Glu-203 each contribute to the substrate site. 204 to 206 (TTT) is an NAD(+) binding site. Substrate is bound by residues Lys-233 and Asp-237. NAD(+) is bound by residues Asn-238, 267–272 (GYGDVG), Glu-290, Asn-325, 346–348 (IGH), and Asn-394.

Belongs to the adenosylhomocysteinase family. NAD(+) is required as a cofactor.

The protein localises to the cytoplasm. The enzyme catalyses S-adenosyl-L-homocysteine + H2O = L-homocysteine + adenosine. It participates in amino-acid biosynthesis; L-homocysteine biosynthesis; L-homocysteine from S-adenosyl-L-homocysteine: step 1/1. May play a key role in the regulation of the intracellular concentration of adenosylhomocysteine. The polypeptide is Adenosylhomocysteinase (Nitratidesulfovibrio vulgaris (strain ATCC 29579 / DSM 644 / CCUG 34227 / NCIMB 8303 / VKM B-1760 / Hildenborough) (Desulfovibrio vulgaris)).